Reading from the N-terminus, the 84-residue chain is Small ribosomal subunit protein bS20 (84 aa).

This sequence belongs to the bacterial ribosomal protein bS20 family.

In terms of biological role, binds directly to 16S ribosomal RNA. This chain is Small ribosomal subunit protein bS20, found in Lacticaseibacillus casei (strain BL23) (Lactobacillus casei).